Here is a 302-residue protein sequence, read N- to C-terminus: F-box protein At1g20360 (302 aa).

The 48-residue stretch at 1–48 (MNSLPLHLLDQILFRLEPKSLAMMKSTNRTINSHISDPLFESEYFSRL) folds into the F-box domain.

The protein is F-box protein At1g20360 of Arabidopsis thaliana (Mouse-ear cress).